Consider the following 494-residue polypeptide: Glutamyl-tRNA(Gln) amidotransferase subunit A (494 aa).

Active-site charge relay system residues include Lys78 and Ser158. The Acyl-ester intermediate role is filled by Ser182.

This sequence belongs to the amidase family. GatA subfamily. Heterotrimer of A, B and C subunits.

It catalyses the reaction L-glutamyl-tRNA(Gln) + L-glutamine + ATP + H2O = L-glutaminyl-tRNA(Gln) + L-glutamate + ADP + phosphate + H(+). Allows the formation of correctly charged Gln-tRNA(Gln) through the transamidation of misacylated Glu-tRNA(Gln) in organisms which lack glutaminyl-tRNA synthetase. The reaction takes place in the presence of glutamine and ATP through an activated gamma-phospho-Glu-tRNA(Gln). The chain is Glutamyl-tRNA(Gln) amidotransferase subunit A from Xanthobacter autotrophicus (strain ATCC BAA-1158 / Py2).